Here is a 197-residue protein sequence, read N- to C-terminus: Histidine biosynthesis bifunctional protein HisIE (197 aa).

A phosphoribosyl-AMP cyclohydrolase region spans residues 1–108 (MMTLYPVVVQ…RFEETGSPTF (108 aa)). A phosphoribosyl-ATP pyrophosphohydrolase region spans residues 109–197 (WLELYRLVRK…VMRELEKRRK (89 aa)).

The protein in the N-terminal section; belongs to the PRA-CH family. This sequence in the C-terminal section; belongs to the PRA-PH family.

The protein resides in the cytoplasm. The catalysed reaction is 1-(5-phospho-beta-D-ribosyl)-ATP + H2O = 1-(5-phospho-beta-D-ribosyl)-5'-AMP + diphosphate + H(+). The enzyme catalyses 1-(5-phospho-beta-D-ribosyl)-5'-AMP + H2O = 1-(5-phospho-beta-D-ribosyl)-5-[(5-phospho-beta-D-ribosylamino)methylideneamino]imidazole-4-carboxamide. It functions in the pathway amino-acid biosynthesis; L-histidine biosynthesis; L-histidine from 5-phospho-alpha-D-ribose 1-diphosphate: step 2/9. It participates in amino-acid biosynthesis; L-histidine biosynthesis; L-histidine from 5-phospho-alpha-D-ribose 1-diphosphate: step 3/9. This Thermotoga maritima (strain ATCC 43589 / DSM 3109 / JCM 10099 / NBRC 100826 / MSB8) protein is Histidine biosynthesis bifunctional protein HisIE (hisI).